Reading from the N-terminus, the 121-residue chain is Putative membrane protein insertion efficiency factor (121 aa).

It belongs to the UPF0161 family.

It localises to the cell membrane. Its function is as follows. Could be involved in insertion of integral membrane proteins into the membrane. This is Putative membrane protein insertion efficiency factor from Rhodococcus opacus (strain B4).